The sequence spans 347 residues: 4-hydroxy-2-oxovalerate aldolase (347 aa).

Residues 2–252 (ILISDATLRD…DTRTTFERVM (251 aa)) enclose the Pyruvate carboxyltransferase domain. Residue 10–11 (RD) coordinates substrate. Aspartate 11 serves as a coordination point for Mn(2+). The active-site Proton acceptor is the histidine 14. Serine 164 and histidine 191 together coordinate substrate. Mn(2+)-binding residues include histidine 191 and histidine 193.

This sequence belongs to the 4-hydroxy-2-oxovalerate aldolase family.

It catalyses the reaction (S)-4-hydroxy-2-oxopentanoate = acetaldehyde + pyruvate. In Burkholderia pseudomallei (strain 1710b), this protein is 4-hydroxy-2-oxovalerate aldolase (mhpE).